Consider the following 322-residue polypeptide: Putative T-box protein 11 (322 aa).

Residues 16-185 (LWRSCHEYDN…NNPYSTGSRK (170 aa)) constitute a DNA-binding region (T-box). The segment covering 171-182 (TLKTNNNPYSTG) has biased composition (polar residues). Positions 171–214 (TLKTNNNPYSTGSRKDRRRERQSPVYSEGTSSEKSISPPPAKKI) are disordered.

The protein localises to the nucleus. This chain is Putative T-box protein 11 (tbx-11), found in Caenorhabditis elegans.